Consider the following 185-residue polypeptide: Ribosome maturation factor RimM (185 aa).

Residues 105–184 (KDEYYWKDII…IVVVDWEIYK (80 aa)) enclose the PRC barrel domain.

The protein belongs to the RimM family. In terms of assembly, binds ribosomal protein uS19.

It localises to the cytoplasm. Functionally, an accessory protein needed during the final step in the assembly of 30S ribosomal subunit, possibly for assembly of the head region. Essential for efficient processing of 16S rRNA. May be needed both before and after RbfA during the maturation of 16S rRNA. It has affinity for free ribosomal 30S subunits but not for 70S ribosomes. This is Ribosome maturation factor RimM from Blochmanniella floridana.